We begin with the raw amino-acid sequence, 245 residues long: MTSTTSFTRADGRAQDQMRTVKITRGFTTNPAGSVLIEFGNTRVMCTASVELGVPRFKRDSGEGWLTAEYAMLPAATAERNRRESMAGKVKGRTHEISRLIGRSLRAAVDLSQLGENTIAIDCDVLQADGGTRTAAITGAYVALADAIRVLKEQGVVPGDPLLPPVAAVSVGLIDGQPCLDLPYEEDVRADVDMNVVMTESGEFVEIQGTGEETTFTRAQLNEMLDIAEKGCRELVHAQKAALGI.

Phosphate is bound by residues arginine 93 and 131 to 133; that span reads GTR.

The protein belongs to the RNase PH family. As to quaternary structure, homohexameric ring arranged as a trimer of dimers.

The enzyme catalyses tRNA(n+1) + phosphate = tRNA(n) + a ribonucleoside 5'-diphosphate. Phosphorolytic 3'-5' exoribonuclease that plays an important role in tRNA 3'-end maturation. Removes nucleotide residues following the 3'-CCA terminus of tRNAs; can also add nucleotides to the ends of RNA molecules by using nucleoside diphosphates as substrates, but this may not be physiologically important. Probably plays a role in initiation of 16S rRNA degradation (leading to ribosome degradation) during starvation. The chain is Ribonuclease PH from Corynebacterium efficiens (strain DSM 44549 / YS-314 / AJ 12310 / JCM 11189 / NBRC 100395).